A 1038-amino-acid chain; its full sequence is MTSSLQRPWRVPWLPWTILLVSTAAASQNQERLCAFKDPYQQDLGIGESRISHENGTILCSKGSTCYGLWEKSKGDINLVKQGCWSHIGDPQECHYEECVVTTTPPSIQNGTYRFCCCSTDLCNVNFTENFPPPDTTPLSPPHSFNRDETIIIALASVSVLAVLIVALCFGYRMLTGDRKQGLHSMNMMEAAASEPSLDLDNLKLLELIGRGRYGAVYKGSLDERPVAVKVFSFANRQNFINEKNIYRVPLMEHDNIARFIVGDERVTADGRMEYLLVMEYYPNGSLCKYLSLHTSDWVSSCRLAHSVTRGLAYLHTELPRGDHYKPAISHRDLNSRNVLVKNDGTCVISDFGLSMRLTGNRLVRPGEEDNAAISEVGTIRYMAPEVLEGAVNLRDCESALKQVDMYALGLIYWEIFMRCTDLFPGESVPEYQMAFQTEVGNHPTFEDMQVLVSREKQRPKFPEAWKENSLAVRSLKETIEDCWDQDAEARLTAQCAEERMAELMMIWERNKSVSPTVNPMSTAMQNERNLSHNRRVPKIGPYPDYSSSSYIEDSIHHTDSIVKNISSEHSMSSTPLTIGEKNRNSINYERQQAQARIPSPETSVTSLSTNTTTTNTTGLTPSTGMTTISEMPYPDETNLHTTNVAQSIGPTPVCLQLTEEDLETNKLDPKEVDKNLKESSDENLMEHSLKQFSGPDPLSSTSSSLLYPLIKLAVEATGQQDFTQTANGQACLIPDVLPTQIYPLPKQQNLPKRPTSLPLNTKNSTKEPRLKFGSKHKSNLKQVETGVAKMNTINAAEPHVVTVTMNGVAGRNHSVNSHAATTQYANGTVLSGQTTNIVTHRAQEMLQNQFIGEDTRLNINSSPDEHEPLLRREQQAGHDEGVLDRLVDRRERPLEGGRTNSNNNNSNPCSEQDVLAQGVPSTAADPGPSKPRRAQRPNSLDLSATNVLDGSSIQIGESTQDGKSGSGEKIKKRVKTPYSLKRWRPSTWVISTESLDCEVNNNGSNRAVHSKSSTAVYLAEGGTATTMVSKDIGMNCL.

Residues 1 to 26 form the signal peptide; sequence MTSSLQRPWRVPWLPWTILLVSTAAA. Residues 27 to 150 are Extracellular-facing; it reads SQNQERLCAF…PPHSFNRDET (124 aa). 5 disulfide bridges follow: cysteine 34–cysteine 66, cysteine 60–cysteine 84, cysteine 94–cysteine 117, cysteine 99–cysteine 116, and cysteine 118–cysteine 123. Asparagine 55 is a glycosylation site (N-linked (GlcNAc...) asparagine). Asparagine 110 carries N-linked (GlcNAc...) asparagine glycosylation. The N-linked (GlcNAc...) asparagine glycan is linked to asparagine 126. A helical membrane pass occupies residues 151–171; that stretch reads IIIALASVSVLAVLIVALCFG. The Cytoplasmic segment spans residues 172–1038; it reads YRMLTGDRKQ…VSKDIGMNCL (867 aa). Positions 203 to 504 constitute a Protein kinase domain; the sequence is LKLLELIGRG…QCAEERMAEL (302 aa). Residues 209–217, lysine 230, and 280–282 contribute to the ATP site; these read IGRGRYGAV and EYY. Residue aspartate 333 is the Proton acceptor of the active site. ATP is bound by residues 337–338 and aspartate 351; that span reads RN. Position 379 is a phosphothreonine (threonine 379). Serine 586 carries the phosphoserine modification. A disordered region spans residues 593 to 626; the sequence is QAQARIPSPETSVTSLSTNTTTTNTTGLTPSTGM. Residues 603 to 626 show a composition bias toward low complexity; sequence TSVTSLSTNTTTTNTTGLTPSTGM. Phosphoserine occurs at positions 680 and 681. 2 disordered regions span residues 746-770 and 872-972; these read PKQQ…KEPR and RREQ…EKIK. Residues 872 to 896 show a composition bias toward basic and acidic residues; sequence RREQQAGHDEGVLDRLVDRRERPLE. Over residues 937-964 the composition is skewed to polar residues; that stretch reads RPNSLDLSATNVLDGSSIQIGESTQDGK.

Belongs to the protein kinase superfamily. TKL Ser/Thr protein kinase family. TGFB receptor subfamily. As to quaternary structure, interacts with GDF5. Interacts with BMP4. Interacts with SCUBE3. Interacts with TSC22D1/TSC-22. Interacts with activin A/INHBA. Mg(2+) serves as cofactor. It depends on Mn(2+) as a cofactor. Highly expressed in heart and liver.

It is found in the cell membrane. The catalysed reaction is L-threonyl-[receptor-protein] + ATP = O-phospho-L-threonyl-[receptor-protein] + ADP + H(+). It catalyses the reaction L-seryl-[receptor-protein] + ATP = O-phospho-L-seryl-[receptor-protein] + ADP + H(+). On ligand binding, forms a receptor complex consisting of two type II and two type I transmembrane serine/threonine kinases. Type II receptors phosphorylate and activate type I receptors which autophosphorylate, then bind and activate SMAD transcriptional regulators. Can also mediate signaling through the activation of the p38MAPK cascade. Binds to BMP7, BMP2 and, less efficiently, BMP4. Binding is weak but enhanced by the presence of type I receptors for BMPs. Mediates induction of adipogenesis by GDF6. Promotes signaling also by binding to activin A/INHBA. This chain is Bone morphogenetic protein receptor type-2 (BMPR2), found in Homo sapiens (Human).